The following is a 184-amino-acid chain: Adenine phosphoribosyltransferase (184 aa).

The protein belongs to the purine/pyrimidine phosphoribosyltransferase family. As to quaternary structure, homodimer.

The protein resides in the cytoplasm. The enzyme catalyses AMP + diphosphate = 5-phospho-alpha-D-ribose 1-diphosphate + adenine. Its pathway is purine metabolism; AMP biosynthesis via salvage pathway; AMP from adenine: step 1/1. Catalyzes a salvage reaction resulting in the formation of AMP, that is energically less costly than de novo synthesis. The polypeptide is Adenine phosphoribosyltransferase (Sphingopyxis alaskensis (strain DSM 13593 / LMG 18877 / RB2256) (Sphingomonas alaskensis)).